Here is a 445-residue protein sequence, read N- to C-terminus: Methylenetetrahydrofolate--tRNA-(uracil-5-)-methyltransferase TrmFO (445 aa).

FAD is bound at residue 10-15 (GGGLAG).

The protein belongs to the MnmG family. TrmFO subfamily. It depends on FAD as a cofactor.

It localises to the cytoplasm. The catalysed reaction is uridine(54) in tRNA + (6R)-5,10-methylene-5,6,7,8-tetrahydrofolate + NADH + H(+) = 5-methyluridine(54) in tRNA + (6S)-5,6,7,8-tetrahydrofolate + NAD(+). The enzyme catalyses uridine(54) in tRNA + (6R)-5,10-methylene-5,6,7,8-tetrahydrofolate + NADPH + H(+) = 5-methyluridine(54) in tRNA + (6S)-5,6,7,8-tetrahydrofolate + NADP(+). Its function is as follows. Catalyzes the folate-dependent formation of 5-methyl-uridine at position 54 (M-5-U54) in all tRNAs. The chain is Methylenetetrahydrofolate--tRNA-(uracil-5-)-methyltransferase TrmFO from Microcystis aeruginosa (strain NIES-843 / IAM M-2473).